Reading from the N-terminus, the 473-residue chain is Photosystem II CP43 reaction center protein (473 aa).

Positions 1–14 (MKTLYSLRRFYHVE) are excised as a propeptide. An N-acetylthreonine modification is found at T15. T15 is subject to Phosphothreonine. Helical transmembrane passes span 69 to 93 (LFEV…PHLA), 134 to 155 (LLGP…KDRN), 178 to 200 (KALF…RKIT), 255 to 275 (KPFA…LSYS), and 291 to 312 (WFNN…ASQA). E367 provides a ligand contact to [CaMn4O5] cluster. The chain crosses the membrane as a helical span at residues 447–471 (RARAAAAGFEKGIDRDFEPVLSMTP).

This sequence belongs to the PsbB/PsbC family. PsbC subfamily. In terms of assembly, PSII is composed of 1 copy each of membrane proteins PsbA, PsbB, PsbC, PsbD, PsbE, PsbF, PsbH, PsbI, PsbJ, PsbK, PsbL, PsbM, PsbT, PsbX, PsbY, PsbZ, Psb30/Ycf12, at least 3 peripheral proteins of the oxygen-evolving complex and a large number of cofactors. It forms dimeric complexes. Binds multiple chlorophylls and provides some of the ligands for the Ca-4Mn-5O cluster of the oxygen-evolving complex. It may also provide a ligand for a Cl- that is required for oxygen evolution. PSII binds additional chlorophylls, carotenoids and specific lipids. serves as cofactor.

It is found in the plastid. It localises to the chloroplast thylakoid membrane. One of the components of the core complex of photosystem II (PSII). It binds chlorophyll and helps catalyze the primary light-induced photochemical processes of PSII. PSII is a light-driven water:plastoquinone oxidoreductase, using light energy to abstract electrons from H(2)O, generating O(2) and a proton gradient subsequently used for ATP formation. This chain is Photosystem II CP43 reaction center protein, found in Fagopyrum esculentum subsp. ancestrale (Wild buckwheat).